The chain runs to 120 residues: uncharacterized protein (120 aa).

The protein to M.jannaschii MJ0361.

This is an uncharacterized protein from Methanocaldococcus jannaschii (strain ATCC 43067 / DSM 2661 / JAL-1 / JCM 10045 / NBRC 100440) (Methanococcus jannaschii).